The primary structure comprises 826 residues: Outer membrane usher protein YehB (826 aa).

Positions 1–22 (MLRMTPLASAIVALLLGIEAYA) are cleaved as a signal peptide. Cys809 and Cys825 are disulfide-bonded.

It belongs to the fimbrial export usher family.

Its subcellular location is the cell outer membrane. In terms of biological role, part of the yehABCD fimbrial operon. Could contribute to adhesion to various surfaces in specific environmental niches. Probably involved in the export and assembly of fimbrial subunits across the outer membrane. The sequence is that of Outer membrane usher protein YehB (yehB) from Escherichia coli (strain K12).